The primary structure comprises 500 residues: Probable cytosol aminopeptidase (500 aa).

Mn(2+)-binding residues include lysine 265 and aspartate 270. Lysine 277 is an active-site residue. Positions 288, 347, and 349 each coordinate Mn(2+). Arginine 351 is an active-site residue.

Belongs to the peptidase M17 family. Requires Mn(2+) as cofactor.

The protein resides in the cytoplasm. It catalyses the reaction Release of an N-terminal amino acid, Xaa-|-Yaa-, in which Xaa is preferably Leu, but may be other amino acids including Pro although not Arg or Lys, and Yaa may be Pro. Amino acid amides and methyl esters are also readily hydrolyzed, but rates on arylamides are exceedingly low.. The catalysed reaction is Release of an N-terminal amino acid, preferentially leucine, but not glutamic or aspartic acids.. Its function is as follows. Presumably involved in the processing and regular turnover of intracellular proteins. Catalyzes the removal of unsubstituted N-terminal amino acids from various peptides. The chain is Probable cytosol aminopeptidase from Corynebacterium glutamicum (strain ATCC 13032 / DSM 20300 / JCM 1318 / BCRC 11384 / CCUG 27702 / LMG 3730 / NBRC 12168 / NCIMB 10025 / NRRL B-2784 / 534).